Here is a 356-residue protein sequence, read N- to C-terminus: 1-deoxy-D-xylulose 5-phosphate reductoisomerase (356 aa).

NADPH contacts are provided by threonine 7, glycine 8, serine 9, isoleucine 10, glycine 31, asparagine 33, and asparagine 111. 1-deoxy-D-xylulose 5-phosphate is bound at residue lysine 112. Residue glutamate 113 coordinates NADPH. A Mn(2+)-binding site is contributed by aspartate 131. 4 residues coordinate 1-deoxy-D-xylulose 5-phosphate: serine 132, glutamate 133, serine 155, and histidine 178. Glutamate 133 is a binding site for Mn(2+). Glycine 184 contacts NADPH. 4 residues coordinate 1-deoxy-D-xylulose 5-phosphate: serine 191, asparagine 196, lysine 197, and glutamate 200. Glutamate 200 contributes to the Mn(2+) binding site.

It belongs to the DXR family. It depends on Mg(2+) as a cofactor. The cofactor is Mn(2+).

The catalysed reaction is 2-C-methyl-D-erythritol 4-phosphate + NADP(+) = 1-deoxy-D-xylulose 5-phosphate + NADPH + H(+). The protein operates within isoprenoid biosynthesis; isopentenyl diphosphate biosynthesis via DXP pathway; isopentenyl diphosphate from 1-deoxy-D-xylulose 5-phosphate: step 1/6. Catalyzes the NADPH-dependent rearrangement and reduction of 1-deoxy-D-xylulose-5-phosphate (DXP) to 2-C-methyl-D-erythritol 4-phosphate (MEP). This is 1-deoxy-D-xylulose 5-phosphate reductoisomerase from Campylobacter jejuni subsp. jejuni serotype O:23/36 (strain 81-176).